Here is a 594-residue protein sequence, read N- to C-terminus: (-)-endo-fenchol synthase, chloroplastic (594 aa).

The transit peptide at 1-50 directs the protein to the chloroplast; it reads MSSLVMHVGIVNKPAITYLPTLSRSASNLHNVSSTRLQTSCSLQLDYKPV. Asp-348, Asp-352, Asp-492, and Glu-500 together coordinate Mg(2+). The short motif at 348–352 is the DDXXD motif element; it reads DDIYD.

It belongs to the terpene synthase family. Tpsa subfamily. Mg(2+) serves as cofactor. Requires Mn(2+) as cofactor. In terms of tissue distribution, expressed at high levels in leaves.

It is found in the plastid. It localises to the chloroplast. The catalysed reaction is (2E)-geranyl diphosphate = alpha-pinene + diphosphate. It carries out the reaction (2E)-geranyl diphosphate + H2O = (1S,2S,4R)-endo-fenchol + diphosphate. It catalyses the reaction (2E)-geranyl diphosphate = limonene + diphosphate. It participates in secondary metabolite biosynthesis; terpenoid biosynthesis. Its function is as follows. Monoterpene synthase involved in the biosynthesis of volatile compounds widely used in aromatherapy and folk medicine, and present in culinary herbs. Mediates the conversion of (2E)-geranyl diphosphate (GPP) into alpha fenchol, limonene and alpha-pinene and, as minor compounds, into beta-myrcene, alpha-terpinolene and alpha-phellandrene. The protein is (-)-endo-fenchol synthase, chloroplastic of Lavandula pedunculata subsp. lusitanica (French lavender).